An 866-amino-acid polypeptide reads, in one-letter code: Leucine--tRNA ligase (866 aa).

The 'HIGH' region motif lies at 42–52; the sequence is PYPSGKLHMGH. The 'KMSKS' region signature appears at 624–628; that stretch reads TMSKS. ATP is bound at residue K627.

This sequence belongs to the class-I aminoacyl-tRNA synthetase family.

The protein resides in the cytoplasm. It catalyses the reaction tRNA(Leu) + L-leucine + ATP = L-leucyl-tRNA(Leu) + AMP + diphosphate. The polypeptide is Leucine--tRNA ligase (Nitrosospira multiformis (strain ATCC 25196 / NCIMB 11849 / C 71)).